The following is a 158-amino-acid chain: MTELKLIHIFTDGSCLGNPGPGGYGIVMNYKGHTKEMSDGFALTTNNRMELLAPIVALEALKEPCKVILTSDSQYMRQGITTWIHGWKKKGWMTSNRTPVKNVDLWKRLDKAAQLHHIDWRWVKGHAGHAENERCDQLARAAAEASPTQIDEGYQADS.

One can recognise an RNase H type-1 domain in the interval 3 to 144 (ELKLIHIFTD…CDQLARAAAE (142 aa)). Mg(2+) is bound by residues Asp12, Glu50, Asp72, and Asp136.

Belongs to the RNase H family. In terms of assembly, monomer. It depends on Mg(2+) as a cofactor.

Its subcellular location is the cytoplasm. It catalyses the reaction Endonucleolytic cleavage to 5'-phosphomonoester.. Endonuclease that specifically degrades the RNA of RNA-DNA hybrids. The sequence is that of Ribonuclease H from Shewanella sp. (strain MR-7).